The sequence spans 592 residues: Putative RING finger protein ORF9 (592 aa).

Residues 12 to 49 (CCICLEEDIERVDTIPCQHTVCRPCYLKPMINKCPVCR) form an RING-type zinc finger. Positions 414–441 (WELIKREELLQRRYKREEQNLKYTSNRL) form a coiled coil.

The polypeptide is Putative RING finger protein ORF9 (Ostreid herpesvirus 1 (isolate France) (OsHV-1)).